A 292-amino-acid polypeptide reads, in one-letter code: MAISASLVKQLRERTGSGMMECKKALVETDGDLDAAVELMRKKGLAKADKKSGRIAAEGIIAAKRSEDGHSGVLVEINSETDFVAKSDDFLAFADGVARLALEEKPEDLEALMACELNGQDLATATKELVAKIGENIQVRRFVRYGSSGNTVAQYLHGSRIGVMVELEGGDEQLARDVAMHVAASKPECVSEDDMPAEVIEKEKAILVEQARESGKPEEIIEKMVQGRLKKFINEQTLVGQPFVKDPDQTVGELLKGAGAKVARFVRYEVGEGKEKKEENFAEEVMAQARGS.

An involved in Mg(2+) ion dislocation from EF-Tu region spans residues 81-84 (TDFV).

It belongs to the EF-Ts family.

It is found in the cytoplasm. Its function is as follows. Associates with the EF-Tu.GDP complex and induces the exchange of GDP to GTP. It remains bound to the aminoacyl-tRNA.EF-Tu.GTP complex up to the GTP hydrolysis stage on the ribosome. This chain is Elongation factor Ts, found in Alkalilimnicola ehrlichii (strain ATCC BAA-1101 / DSM 17681 / MLHE-1).